We begin with the raw amino-acid sequence, 427 residues long: Hydroxylamine reductase (427 aa).

4 residues coordinate [4Fe-4S] cluster: Cys-3, Cys-6, Cys-15, and Cys-21. Positions 129, 153, 197, 283, 311, 336, 370, and 372 each coordinate hybrid [4Fe-2O-2S] cluster. A Cysteine persulfide modification is found at Cys-283.

The protein belongs to the HCP family. [4Fe-4S] cluster is required as a cofactor. It depends on hybrid [4Fe-2O-2S] cluster as a cofactor.

It localises to the cytoplasm. The catalysed reaction is A + NH4(+) + H2O = hydroxylamine + AH2 + H(+). Its function is as follows. Catalyzes the reduction of hydroxylamine to form NH(3) and H(2)O. This chain is Hydroxylamine reductase, found in Methanothermobacter thermautotrophicus (strain ATCC 29096 / DSM 1053 / JCM 10044 / NBRC 100330 / Delta H) (Methanobacterium thermoautotrophicum).